Consider the following 250-residue polypeptide: 2,3-bisphosphoglycerate-dependent phosphoglycerate mutase (250 aa).

Residues 8–15 (RHGESQWN), 21–22 (TG), R60, 87–90 (ERHY), K98, 114–115 (RR), and 183–184 (GN) each bind substrate. H9 serves as the catalytic Tele-phosphohistidine intermediate. Residue E87 is the Proton donor/acceptor of the active site.

The protein belongs to the phosphoglycerate mutase family. BPG-dependent PGAM subfamily. In terms of assembly, homodimer.

It catalyses the reaction (2R)-2-phosphoglycerate = (2R)-3-phosphoglycerate. It participates in carbohydrate degradation; glycolysis; pyruvate from D-glyceraldehyde 3-phosphate: step 3/5. Catalyzes the interconversion of 2-phosphoglycerate and 3-phosphoglycerate. This Bordetella parapertussis (strain 12822 / ATCC BAA-587 / NCTC 13253) protein is 2,3-bisphosphoglycerate-dependent phosphoglycerate mutase.